Here is a 304-residue protein sequence, read N- to C-terminus: Undecaprenyl-diphosphatase (304 aa).

8 consecutive transmembrane segments (helical) span residues F5–P25, G47–L67, I72–S92, F111–D131, L137–I157, I209–G231, T248–I268, and I282–V302.

This sequence belongs to the UppP family.

It is found in the cell membrane. The enzyme catalyses di-trans,octa-cis-undecaprenyl diphosphate + H2O = di-trans,octa-cis-undecaprenyl phosphate + phosphate + H(+). Catalyzes the dephosphorylation of undecaprenyl diphosphate (UPP). Confers resistance to bacitracin. This is Undecaprenyl-diphosphatase from Clostridium perfringens (strain SM101 / Type A).